The chain runs to 73 residues: uncharacterized protein (73 aa).

Residues 54–72 traverse the membrane as a helical segment; it reads VSFIVAPTVMQVQCLFFFI.

The protein resides in the membrane. This is an uncharacterized protein from Saccharomyces cerevisiae (strain ATCC 204508 / S288c) (Baker's yeast).